Consider the following 344-residue polypeptide: Arginine N-succinyltransferase (344 aa).

A succinyl-CoA-binding site is contributed by L125. The Proton donor role is filled by H229.

This sequence belongs to the arginine N-succinyltransferase family.

It carries out the reaction succinyl-CoA + L-arginine = N(2)-succinyl-L-arginine + CoA + H(+). Its pathway is amino-acid degradation; L-arginine degradation via AST pathway; L-glutamate and succinate from L-arginine: step 1/5. In terms of biological role, catalyzes the transfer of succinyl-CoA to arginine to produce N(2)-succinylarginine. This Escherichia fergusonii (strain ATCC 35469 / DSM 13698 / CCUG 18766 / IAM 14443 / JCM 21226 / LMG 7866 / NBRC 102419 / NCTC 12128 / CDC 0568-73) protein is Arginine N-succinyltransferase.